The primary structure comprises 185 residues: Elongation factor P (185 aa).

The protein belongs to the elongation factor P family.

The protein resides in the cytoplasm. The protein operates within protein biosynthesis; polypeptide chain elongation. In terms of biological role, involved in peptide bond synthesis. Stimulates efficient translation and peptide-bond synthesis on native or reconstituted 70S ribosomes in vitro. Probably functions indirectly by altering the affinity of the ribosome for aminoacyl-tRNA, thus increasing their reactivity as acceptors for peptidyl transferase. The polypeptide is Elongation factor P (Streptococcus equi subsp. equi (strain 4047)).